Reading from the N-terminus, the 31-residue chain is Cyclotide mech-5 (31 aa).

A cross-link (cyclopeptide (Gly-Asp)) is located at residues 1 to 31 (GVIPCGESCVFIPCISSVVGCTCKNKVCYRD). Intrachain disulfides connect cysteine 5/cysteine 21, cysteine 9/cysteine 23, and cysteine 14/cysteine 28.

Post-translationally, this is a cyclic peptide. Contains 3 disulfide bonds.

Its function is as follows. Probably participates in a plant defense mechanism (Potential). Binds to and induces leakage in phospholipd membranes, particularly ones containing 1-palmitoyl-2-oleophosphatidylethanolamine (POPE). The protein is Cyclotide mech-5 of Melicytus chathamicus (Chatham Island mahoe).